The following is a 186-amino-acid chain: Agglutinin isolectin 3 (186 aa).

Position 1 is a pyrrolidone carboxylic acid (glutamine 1). 4 consecutive Chitin-binding type-1 domains span residues 1–42 (QRCG…ACWT), 43–85 (SKRC…PCRA), 86–128 (DIKC…ACST), and 129–171 (DKPC…GCDG). 16 disulfides stabilise this stretch: cysteine 3–cysteine 18, cysteine 12–cysteine 24, cysteine 17–cysteine 31, cysteine 35–cysteine 40, cysteine 46–cysteine 61, cysteine 55–cysteine 67, cysteine 60–cysteine 74, cysteine 78–cysteine 83, cysteine 89–cysteine 104, cysteine 98–cysteine 110, cysteine 103–cysteine 117, cysteine 121–cysteine 126, cysteine 132–cysteine 147, cysteine 141–cysteine 153, cysteine 146–cysteine 160, and cysteine 164–cysteine 169. 10 to 12 (MEC) provides a ligand contact to substrate. 62-73 (SQYGHCGFGAEY) lines the substrate pocket. 114–115 (SE) is a substrate binding site. The propeptide occupies 172 to 186 (VFAEAIATNSTLLAE). Asparagine 180 carries N-linked (GlcNAc...) asparagine glycosylation.

As to quaternary structure, homodimer, u-shaped.

Its function is as follows. N-acetyl-D-glucosamine / N-acetyl-D-neuraminic acid binding lectin. This Triticum aestivum (Wheat) protein is Agglutinin isolectin 3.